A 470-amino-acid chain; its full sequence is ATP synthase subunit beta (470 aa).

155–162 (GGAGVGKT) is a binding site for ATP.

The protein belongs to the ATPase alpha/beta chains family. F-type ATPases have 2 components, CF(1) - the catalytic core - and CF(0) - the membrane proton channel. CF(1) has five subunits: alpha(3), beta(3), gamma(1), delta(1), epsilon(1). CF(0) has three main subunits: a(1), b(2) and c(9-12). The alpha and beta chains form an alternating ring which encloses part of the gamma chain. CF(1) is attached to CF(0) by a central stalk formed by the gamma and epsilon chains, while a peripheral stalk is formed by the delta and b chains.

It localises to the cell membrane. It catalyses the reaction ATP + H2O + 4 H(+)(in) = ADP + phosphate + 5 H(+)(out). Functionally, produces ATP from ADP in the presence of a proton gradient across the membrane. The catalytic sites are hosted primarily by the beta subunits. This is ATP synthase subunit beta from Pectinatus frisingensis.